A 280-amino-acid chain; its full sequence is tRNase Z TRZ1 (280 aa).

This sequence belongs to the RNase Z family. Homodimer. The cofactor is Zn(2+). It depends on Ca(2+) as a cofactor. Requires Mn(2+) as cofactor. Mg(2+) serves as cofactor.

The protein resides in the cytoplasm. It carries out the reaction Endonucleolytic cleavage of RNA, removing extra 3' nucleotides from tRNA precursor, generating 3' termini of tRNAs. A 3'-hydroxy group is left at the tRNA terminus and a 5'-phosphoryl group is left at the trailer molecule.. In terms of biological role, zinc phosphodiesterase, which displays tRNA 3'-processing endonuclease activity. Involved in tRNA maturation, by removing a 3'-trailer from precursor tRNA. Can use bis-(p-nitophenyl) phosphate (bpNPP) as substrate. Involved in the processing of small nucleolar RNAs (snoRNAs). The protein is tRNase Z TRZ1 of Arabidopsis thaliana (Mouse-ear cress).